Reading from the N-terminus, the 357-residue chain is MEKGMDVLHDFGIQSTHYLQVNYQDSQDWFILVSVIADLRNAFYVLFPIWFHLREAVGIKLLWVAVIGDWLNLVFKWILFGQRPYWWVMDTDYYSNTSVPLIKQFPVTCETGPGSPSGHAMGTAGVYYVMVTSTLSIFRGRKRPTYRFRCLNILLWLGFWAVQLNVCLSRIYLAAHFPHQVVAGVLSGIAVAETFRHIQSIYNASLKKYFLITFFLFSFAIGFYLLLKGLGVDLLWTLEKARRWCERPEWVHIDTTPFASLLKNVGTLFGLGVTLNSSMYRESCKGKLSKWFPFRLSCIVVSLILLHLFDSLKPPSQTELIFYTLSFCKSAAVPLASVSLIPYCLARVFDQPDKKSL.

The Lumenal portion of the chain corresponds to 1 to 28 (MEKGMDVLHDFGIQSTHYLQVNYQDSQD). A helical transmembrane segment spans residues 29 to 49 (WFILVSVIADLRNAFYVLFPI). Residues 50–60 (WFHLREAVGIK) are Cytoplasmic-facing. A helical transmembrane segment spans residues 61 to 81 (LLWVAVIGDWLNLVFKWILFG). Residues 82 to 117 (QRPYWWVMDTDYYSNTSVPLIKQFPVTCETGPGSPS) lie on the Lumenal side of the membrane. R83 contacts substrate. Residue N96 is glycosylated (N-linked (GlcNAc...) asparagine). Residues 118 to 138 (GHAMGTAGVYYVMVTSTLSIF) traverse the membrane as a helical segment. The Proton donor role is filled by H119. Residues 139–147 (RGRKRPTYR) are Cytoplasmic-facing. The helical transmembrane segment at 148 to 168 (FRCLNILLWLGFWAVQLNVCL) threads the bilayer. Over 169–170 (SR) the chain is Lumenal. Residue R170 participates in substrate binding. The helical transmembrane segment at 171–191 (IYLAAHFPHQVVAGVLSGIAV) threads the bilayer. The active-site Nucleophile is the H176. At 192–209 (AETFRHIQSIYNASLKKY) the chain is on the cytoplasmic side. The chain crosses the membrane as a helical span at residues 210–230 (FLITFFLFSFAIGFYLLLKGL). Over 231–254 (GVDLLWTLEKARRWCERPEWVHID) the chain is Lumenal. The helical transmembrane segment at 255–275 (TTPFASLLKNVGTLFGLGVTL) threads the bilayer. Over 276-291 (NSSMYRESCKGKLSKW) the chain is Cytoplasmic. The helical transmembrane segment at 292 to 312 (FPFRLSCIVVSLILLHLFDSL) threads the bilayer. Residues 313 to 320 (KPPSQTEL) lie on the Lumenal side of the membrane. Residues 321 to 341 (IFYTLSFCKSAAVPLASVSLI) form a helical membrane-spanning segment. The Cytoplasmic portion of the chain corresponds to 342 to 357 (PYCLARVFDQPDKKSL). The Prevents secretion from ER signature appears at 354–357 (KKSL).

Belongs to the glucose-6-phosphatase family.

The protein resides in the endoplasmic reticulum membrane. It carries out the reaction D-glucose 6-phosphate + H2O = D-glucose + phosphate. The protein operates within carbohydrate biosynthesis; gluconeogenesis. Hydrolyzes glucose-6-phosphate to glucose in the endoplasmic reticulum. Forms with the glucose-6-phosphate transporter (SLC37A4/G6PT) the complex responsible for glucose production in the terminal step of glycogenolysis and gluconeogenesis. Hence, it is the key enzyme in homeostatic regulation of blood glucose levels. The polypeptide is Glucose-6-phosphatase catalytic subunit 1 (G6PC1) (Canis lupus familiaris (Dog)).